Here is a 65-residue protein sequence, read N- to C-terminus: uncharacterized protein (65 aa).

It is found in the plastid. The protein localises to the chloroplast. This is an uncharacterized protein from Mesostigma viride (Green alga).